A 932-amino-acid chain; its full sequence is 2-oxoglutarate dehydrogenase E1 component (932 aa).

The protein belongs to the alpha-ketoglutarate dehydrogenase family. Homodimer. Part of the 2-oxoglutarate dehydrogenase (OGDH) complex composed of E1 (2-oxoglutarate dehydrogenase), E2 (dihydrolipoamide succinyltransferase) and E3 (dihydrolipoamide dehydrogenase); the complex contains multiple copies of the three enzymatic components (E1, E2 and E3). Thiamine diphosphate serves as cofactor.

The enzyme catalyses N(6)-[(R)-lipoyl]-L-lysyl-[protein] + 2-oxoglutarate + H(+) = N(6)-[(R)-S(8)-succinyldihydrolipoyl]-L-lysyl-[protein] + CO2. Its function is as follows. E1 component of the 2-oxoglutarate dehydrogenase (OGDH) complex which catalyzes the decarboxylation of 2-oxoglutarate, the first step in the conversion of 2-oxoglutarate to succinyl-CoA and CO(2). The sequence is that of 2-oxoglutarate dehydrogenase E1 component from Staphylococcus aureus (strain USA300).